Reading from the N-terminus, the 156-residue chain is UPF0756 membrane protein Exig_2210 (156 aa).

The next 5 membrane-spanning stretches (helical) occupy residues 5 to 25 (LFLI…LIIA), 52 to 72 (WGVT…DIGF), 83 to 103 (IGII…HGVG), 109 to 129 (PLVT…FRGV), and 131 to 151 (VGPL…DIIV).

It belongs to the UPF0756 family.

The protein resides in the cell membrane. The polypeptide is UPF0756 membrane protein Exig_2210 (Exiguobacterium sibiricum (strain DSM 17290 / CCUG 55495 / CIP 109462 / JCM 13490 / 255-15)).